The primary structure comprises 375 residues: MARGSGQLGGPHRDTVTMPKRGKRLKFRAHDACSGRVTVADYANSDPAVVRSGRVKKAVANAIQQEVKSLCGLEASQVPAEEALSGVGEPCDILDSSDEMDAQEESTQERSVSRKKKSKRHKEDPDGTGEEYPMDIWLLLASYIRPEDIVNFSLICKNAWTVTCTAAFWTRLYRRHYTLDASLPLRLRPESMEKLRCLRACVIRSLYHMYEPFAARISKNPAIPESTPSTLKNSKCLLFWCRKIVGNRQEPMWEFNFKFKKQSPRLKSKCMERLQPPIQYQDVHTNPDQDCCLLQVTTLNFIFIPIVMGMIFTLFTINVSTDMRHHRVRLVFQDSPVRGGQNLRSEQGVQVVLDPVHSVRLFDWWHPQYPFSLRA.

Disordered stretches follow at residues 1–21 (MARGSGQLGGPHRDTVTMPKR) and 94–128 (LDSSDEMDAQEESTQERSVSRKKKSKRHKEDPDGT). Over residues 95–106 (DSSDEMDAQEES) the composition is skewed to acidic residues. Residues 299–319 (LNFIFIPIVMGMIFTLFTINV) traverse the membrane as a helical segment.

This sequence belongs to the TMEM183 family.

The protein localises to the membrane. The protein is Transmembrane protein 183 (Tmem183) of Mus musculus (Mouse).